The chain runs to 338 residues: Outer membrane transporter protein TsaT (338 aa).

Residues 1 to 22 form the signal peptide; the sequence is MNFRRRLCTAALIAALPLASQA.

As to quaternary structure, part of a two-component transport system composed of TsaT and TsaS.

It is found in the cell outer membrane. Involved in the uptake of p-toluenesulphonate (TSA). Forms a large, general diffusion pore with a preference for anions. This is Outer membrane transporter protein TsaT (tsaT) from Comamonas testosteroni (Pseudomonas testosteroni).